The chain runs to 275 residues: Formamidopyrimidine-DNA glycosylase (275 aa).

Residue Pro-2 is the Schiff-base intermediate with DNA of the active site. Glu-3 (proton donor) is an active-site residue. The Proton donor; for beta-elimination activity role is filled by Lys-58. Residues His-93, Arg-111, and Arg-156 each coordinate DNA. An FPG-type zinc finger spans residues Phe-241–Arg-275. Arg-265 serves as the catalytic Proton donor; for delta-elimination activity.

This sequence belongs to the FPG family. In terms of assembly, monomer. It depends on Zn(2+) as a cofactor.

It carries out the reaction Hydrolysis of DNA containing ring-opened 7-methylguanine residues, releasing 2,6-diamino-4-hydroxy-5-(N-methyl)formamidopyrimidine.. It catalyses the reaction 2'-deoxyribonucleotide-(2'-deoxyribose 5'-phosphate)-2'-deoxyribonucleotide-DNA = a 3'-end 2'-deoxyribonucleotide-(2,3-dehydro-2,3-deoxyribose 5'-phosphate)-DNA + a 5'-end 5'-phospho-2'-deoxyribonucleoside-DNA + H(+). Its function is as follows. Involved in base excision repair of DNA damaged by oxidation or by mutagenic agents. Acts as a DNA glycosylase that recognizes and removes damaged bases. Has a preference for oxidized purines, such as 7,8-dihydro-8-oxoguanine (8-oxoG). Has AP (apurinic/apyrimidinic) lyase activity and introduces nicks in the DNA strand. Cleaves the DNA backbone by beta-delta elimination to generate a single-strand break at the site of the removed base with both 3'- and 5'-phosphates. The chain is Formamidopyrimidine-DNA glycosylase from Burkholderia cenocepacia (strain HI2424).